The chain runs to 246 residues: Bis(5'-nucleosyl)-tetraphosphatase PrpE [asymmetrical] (246 aa).

This sequence belongs to the PrpE family. The cofactor is Ni(2+).

It carries out the reaction P(1),P(4)-bis(5'-guanosyl) tetraphosphate + H2O = GMP + GTP + 2 H(+). Its function is as follows. Asymmetrically hydrolyzes Ap4p to yield AMP and ATP. This Halalkalibacterium halodurans (strain ATCC BAA-125 / DSM 18197 / FERM 7344 / JCM 9153 / C-125) (Bacillus halodurans) protein is Bis(5'-nucleosyl)-tetraphosphatase PrpE [asymmetrical].